The chain runs to 711 residues: MMFRDQVGVLAGWFKGWNECEQTVALLSLLKRVSQTQARFLQLCLEHSLADCAELHVLEGEANSPGIINQWQQESKDKVISLLLTHLPLLKPGNLDAKAEYMKLLPKILAHSIEHNQHIEESRQLLSYALIHPATSLEDRSALAMWLNHLEDRTSTSFGSQNRGRSDSVDYGQTHYYHQRQNSDDKLNGWQNSRDSGICISASNWQDKSLGCENGHVPLYSSSSVPATINTIGTGASTILSGQAHHSPLKRSVSLTPPMNVPNQPLGHGWMSHEDLRARGPQCLPSDHAPLSPQSSVASSGSGGSEHLEDQTTARNTFQEEGSGMKDVPAWLKSLRLHKYAALFSQMTYEEMMALTECQLEAQNVTKGARHKIVISIQKLKERQNLLKSLERDIIEGGSLRTPLQELHQMILTPIKAYSSPSTTPEVRCREPSLMESPSPDCKDSAAAVTSATASASAGASGGLQPPQLSSCDGELAVAPLPEGDLPGQFTRVMGKVCTQLLVSRPDEENISSYLQLLDKCLVHEAFTETQKKRLLSWKQQVQKLFRSFPRKTLLDISGYRQQRNRGFGQSNSLPTASSVGSGMGRRNPRQYQIASRNVPSARLGLLGTSGFVSSNQRHTAANPTIMKQGRQNLWFANPGGSNSMPSRTHSSVQKTRSLPVHTSPQNMLMFQQPEFQLPVTEPDINNRLESLCLSMTEHALGDGVDRTSTI.

At S168 the chain carries Phosphoserine. The tract at residues A278–S323 is disordered. The region spanning S323 to E396 is the SAM domain. At S420 the chain carries Phosphoserine. Disordered regions lie at residues S422–A448 and N565–N588. T424 is subject to Phosphothreonine. Position 566 is an omega-N-methylarginine (R566). A compositionally biased stretch (polar residues) spans F568–G581. S573 carries the post-translational modification Phosphoserine.

It belongs to the SMAUG family. Expressed in brain (at protein level).

The protein localises to the cytoplasm. It localises to the cell projection. Its subcellular location is the dendrite. The protein resides in the synapse. It is found in the synaptosome. Its function is as follows. Acts as a translational repressor of SRE-containing messengers. The chain is Protein Smaug homolog 1 (Samd4a) from Mus musculus (Mouse).